Reading from the N-terminus, the 188-residue chain is Large ribosomal subunit protein eL18 (188 aa).

A Glycyl lysine isopeptide (Lys-Gly) (interchain with G-Cter in SUMO2) cross-link involves residue Lys-119. The residue at position 130 (Ser-130) is a Phosphoserine. Residues 150-188 (RHFGKAPGTPHSHTKPYVRSKGRKFERARGRRASRGYKN) are disordered. Thr-158 bears the Phosphothreonine mark. Composition is skewed to basic residues over residues 161–171 (SHTKPYVRSKG) and 178–188 (RGRRASRGYKN). Residue Lys-164 forms a Glycyl lysine isopeptide (Lys-Gly) (interchain with G-Cter in SUMO2) linkage.

It belongs to the eukaryotic ribosomal protein eL18 family. As to quaternary structure, component of the large ribosomal subunit.

The protein resides in the cytoplasm. It localises to the cytosol. The protein localises to the rough endoplasmic reticulum. Functionally, component of the large ribosomal subunit. The ribosome is a large ribonucleoprotein complex responsible for the synthesis of proteins in the cell. This Mus musculus (Mouse) protein is Large ribosomal subunit protein eL18 (Rpl18).